The chain runs to 336 residues: Ornithine carbamoyltransferase (336 aa).

Residues serine 56–threonine 59, glutamine 83, arginine 107, and histidine 134–glutamine 137 each bind carbamoyl phosphate. Residues asparagine 168, aspartate 232, and serine 236–methionine 237 contribute to the L-ornithine site. Residues cysteine 274 to leucine 275 and arginine 320 each bind carbamoyl phosphate.

The protein belongs to the aspartate/ornithine carbamoyltransferase superfamily. OTCase family.

The protein resides in the cytoplasm. It carries out the reaction carbamoyl phosphate + L-ornithine = L-citrulline + phosphate + H(+). It functions in the pathway amino-acid biosynthesis; L-arginine biosynthesis; L-arginine from L-ornithine and carbamoyl phosphate: step 1/3. In terms of biological role, reversibly catalyzes the transfer of the carbamoyl group from carbamoyl phosphate (CP) to the N(epsilon) atom of ornithine (ORN) to produce L-citrulline. The sequence is that of Ornithine carbamoyltransferase from Erwinia tasmaniensis (strain DSM 17950 / CFBP 7177 / CIP 109463 / NCPPB 4357 / Et1/99).